The sequence spans 126 residues: Ribosome-binding factor A (126 aa).

This sequence belongs to the RbfA family. Monomer. Binds 30S ribosomal subunits, but not 50S ribosomal subunits or 70S ribosomes.

The protein resides in the cytoplasm. Functionally, one of several proteins that assist in the late maturation steps of the functional core of the 30S ribosomal subunit. Associates with free 30S ribosomal subunits (but not with 30S subunits that are part of 70S ribosomes or polysomes). Required for efficient processing of 16S rRNA. May interact with the 5'-terminal helix region of 16S rRNA. The protein is Ribosome-binding factor A of Treponema pallidum (strain Nichols).